Reading from the N-terminus, the 243-residue chain is Carboxy-S-adenosyl-L-methionine synthase (243 aa).

S-adenosyl-L-methionine contacts are provided by residues Tyr40, 65–67 (GCS), 90–91 (DN), 118–119 (DI), Asn133, and Arg200.

The protein belongs to the class I-like SAM-binding methyltransferase superfamily. Cx-SAM synthase family. In terms of assembly, homodimer.

It carries out the reaction prephenate + S-adenosyl-L-methionine = carboxy-S-adenosyl-L-methionine + 3-phenylpyruvate + H2O. In terms of biological role, catalyzes the conversion of S-adenosyl-L-methionine (SAM) to carboxy-S-adenosyl-L-methionine (Cx-SAM). The sequence is that of Carboxy-S-adenosyl-L-methionine synthase from Shewanella loihica (strain ATCC BAA-1088 / PV-4).